A 502-amino-acid chain; its full sequence is uncharacterized protein (502 aa).

This is an uncharacterized protein from Frog virus 3 (isolate Goorha) (FV-3).